A 410-amino-acid chain; its full sequence is Histone-lysine N-methyltransferase SUV39H2 (410 aa).

A Chromo domain is found at Tyr-47 to Lys-105. A Pre-SET domain is found at Phe-189–Gly-247. Zn(2+) is bound by residues Cys-191, Cys-193, Cys-196, Cys-201, Cys-202, Cys-229, Cys-233, Cys-235, and Cys-239. One can recognise an SET domain in the interval Tyr-250 to Gln-373. S-adenosyl-L-methionine contacts are provided by residues Arg-261–Trp-263 and Asn-330–His-331. Cys-333 serves as a coordination point for Zn(2+). Tyr-372 serves as a coordination point for S-adenosyl-L-methionine. 3 positions are modified to phosphoserine: Ser-381, Ser-384, and Ser-388. A Post-SET domain is found at Val-394 to Asn-410. Cys-398 lines the Zn(2+) pocket. Lys-399 provides a ligand contact to S-adenosyl-L-methionine. Zn(2+) contacts are provided by Cys-400 and Cys-405.

Belongs to the class V-like SAM-binding methyltransferase superfamily. Histone-lysine methyltransferase family. Suvar3-9 subfamily. In terms of assembly, interacts with SMAD5. The large PER complex involved in the histone methylation is composed of at least PER2, CBX3, TRIM28, SUV39H1 and/or SUV39H2; CBX3 mediates the formation of the complex. Ubiquitinated by the DCX(DCAF13) E3 ubiquitin ligase complex, leading to its degradation.

The protein localises to the nucleus. It is found in the chromosome. It localises to the centromere. The catalysed reaction is L-lysyl(9)-[histone H3] + 3 S-adenosyl-L-methionine = N(6),N(6),N(6)-trimethyl-L-lysyl(9)-[histone H3] + 3 S-adenosyl-L-homocysteine + 3 H(+). Functionally, histone methyltransferase that specifically trimethylates 'Lys-9' of histone H3 using monomethylated H3 'Lys-9' as substrate. H3 'Lys-9' trimethylation represents a specific tag for epigenetic transcriptional repression by recruiting HP1 (CBX1, CBX3 and/or CBX5) proteins to methylated histones. Mainly functions in heterochromatin regions, thereby playing a central role in the establishment of constitutive heterochromatin at pericentric and telomere regions. H3 'Lys-9' trimethylation is also required to direct DNA methylation at pericentric repeats. SUV39H1 is targeted to histone H3 via its interaction with RB1 and is involved in many processes, such as cell cycle regulation, transcriptional repression and regulation of telomere length. May participate in regulation of higher-order chromatin organization during spermatogenesis. Recruited by the large PER complex to the E-box elements of the circadian target genes such as PER2 itself or PER1, contributes to the conversion of local chromatin to a heterochromatin-like repressive state through H3 'Lys-9' trimethylation. The sequence is that of Histone-lysine N-methyltransferase SUV39H2 (SUV39H2) from Homo sapiens (Human).